Here is a 278-residue protein sequence, read N- to C-terminus: HTH-type transcriptional activator RhaS (278 aa).

Residues 174–272 (NQLLAWLEDH…DWSPRDIRQG (99 aa)) enclose the HTH araC/xylS-type domain. 2 DNA-binding regions (H-T-H motif) span residues 191-212 (EEVA…KQQT) and 239-262 (VTDI…RREF).

Binds DNA as a dimer.

It is found in the cytoplasm. Functionally, activates expression of the rhaBAD and rhaT operons. This is HTH-type transcriptional activator RhaS from Klebsiella pneumoniae (strain 342).